A 277-amino-acid chain; its full sequence is ATP synthase subunit a (277 aa).

A run of 5 helical transmembrane segments spans residues 40–60 (AWHVDTLAWSIGLGLLFLIIF), 98–118 (SALIAPLALTIFVWVLLMNLM), 154–174 (DLNLTFALASGVFILILFYSI), 219–239 (LFGNLYASELIFILIATIGYF), and 245–265 (FMWAVFHILVLPLQAFIFMML).

It belongs to the ATPase A chain family. As to quaternary structure, F-type ATPases have 2 components, CF(1) - the catalytic core - and CF(0) - the membrane proton channel. CF(1) has five subunits: alpha(3), beta(3), gamma(1), delta(1), epsilon(1). CF(0) has three main subunits: a(1), b(2) and c(9-12). The alpha and beta chains form an alternating ring which encloses part of the gamma chain. CF(1) is attached to CF(0) by a central stalk formed by the gamma and epsilon chains, while a peripheral stalk is formed by the delta and b chains.

It localises to the cell inner membrane. In terms of biological role, key component of the proton channel; it plays a direct role in the translocation of protons across the membrane. In Alteromonas mediterranea (strain DSM 17117 / CIP 110805 / LMG 28347 / Deep ecotype), this protein is ATP synthase subunit a.